The sequence spans 431 residues: UPF0597 protein BVU_2091 (431 aa).

The protein belongs to the UPF0597 family.

The chain is UPF0597 protein BVU_2091 from Phocaeicola vulgatus (strain ATCC 8482 / DSM 1447 / JCM 5826 / CCUG 4940 / NBRC 14291 / NCTC 11154) (Bacteroides vulgatus).